The chain runs to 125 residues: Small ribosomal subunit protein uS13 (125 aa).

Belongs to the universal ribosomal protein uS13 family. Part of the 30S ribosomal subunit. Forms a loose heterodimer with protein S19. Forms two bridges to the 50S subunit in the 70S ribosome.

Functionally, located at the top of the head of the 30S subunit, it contacts several helices of the 16S rRNA. In the 70S ribosome it contacts the 23S rRNA (bridge B1a) and protein L5 of the 50S subunit (bridge B1b), connecting the 2 subunits; these bridges are implicated in subunit movement. Contacts the tRNAs in the A and P-sites. This is Small ribosomal subunit protein uS13 from Orientia tsutsugamushi (strain Boryong) (Rickettsia tsutsugamushi).